Here is a 100-residue protein sequence, read N- to C-terminus: Glutamyl-tRNA(Gln) amidotransferase subunit C (100 aa).

Belongs to the GatC family. In terms of assembly, heterotrimer of A, B and C subunits.

The enzyme catalyses L-glutamyl-tRNA(Gln) + L-glutamine + ATP + H2O = L-glutaminyl-tRNA(Gln) + L-glutamate + ADP + phosphate + H(+). It carries out the reaction L-aspartyl-tRNA(Asn) + L-glutamine + ATP + H2O = L-asparaginyl-tRNA(Asn) + L-glutamate + ADP + phosphate + 2 H(+). In terms of biological role, allows the formation of correctly charged Asn-tRNA(Asn) or Gln-tRNA(Gln) through the transamidation of misacylated Asp-tRNA(Asn) or Glu-tRNA(Gln) in organisms which lack either or both of asparaginyl-tRNA or glutaminyl-tRNA synthetases. The reaction takes place in the presence of glutamine and ATP through an activated phospho-Asp-tRNA(Asn) or phospho-Glu-tRNA(Gln). The sequence is that of Glutamyl-tRNA(Gln) amidotransferase subunit C from Rickettsia conorii (strain ATCC VR-613 / Malish 7).